A 337-amino-acid chain; its full sequence is Probable uridine nucleosidase 2 (337 aa).

Residue H260 is part of the active site.

It belongs to the IUNH family.

It localises to the cytoplasm. The catalysed reaction is uridine + H2O = D-ribose + uracil. Involved in pyrimidine breakdown. The protein is Probable uridine nucleosidase 2 (URH2) of Oryza sativa subsp. japonica (Rice).